A 751-amino-acid chain; its full sequence is Conserved oligomeric Golgi complex subunit 5 (751 aa).

2 disordered regions span residues 1 to 21 (MVTG…DDND) and 244 to 263 (SPTH…KTPQ).

The protein belongs to the COG5 family. In terms of assembly, component of the conserved oligomeric Golgi complex which is composed of eight different subunits and is required for normal Golgi morphology and localization.

The protein localises to the golgi apparatus membrane. In terms of biological role, required for normal Golgi function and necessary during spermatogenesis. Required for cleavage furrow ingression during cytokinesis in dividing spermatocytes and for the extensive polarized cell growth that accompanies spermatid elongation. This chain is Conserved oligomeric Golgi complex subunit 5 (fws), found in Drosophila melanogaster (Fruit fly).